A 133-amino-acid chain; its full sequence is Putative elongation factor 1-delta-like protein (133 aa).

The span at 58-73 (SLAGSLGPGASSGPSG) shows a compositional bias: low complexity. Disordered regions lie at residues 58–77 (SLAG…DHSE) and 89–133 (NQRD…TSRG). The segment covering 89–102 (NQRDLAERAGEELA) has biased composition (basic and acidic residues).

The protein belongs to the EF-1-beta/EF-1-delta family.

This is Putative elongation factor 1-delta-like protein (EEF1DP3) from Homo sapiens (Human).